Here is a 584-residue protein sequence, read N- to C-terminus: Protein phosphatase 2A scaffold subunit (584 aa).

14 HEAT repeats span residues 7–45, 46–84, 86–123, 168–206, 207–239, 240–278, 279–317, 318–356, 358–395, 397–434, 441–479, 480–512, 513–551, and 553–584; these read ESDD…ALGP, ERTR…FVGG, EHAV…EIPT, LRKT…VKSE, ILPL…MLTN, EENI…SMGT, EITK…LLTK, EMNI…IYGK, DTLT…VIGI, MLSQ…QLGV, LGNL…AKNN, IIPK…VVGG, DVIS…LLDS, and IVQS…LQLC.

Belongs to the phosphatase 2A regulatory subunit A family. Component of the Sca1 complex composed of at least gefA, gefH, scaA, phr, and the protein phosphatase 2A subunits pppA and pho2B.

It localises to the cytoplasm. The protein localises to the cytosol. Its subcellular location is the cell membrane. Scaffolding molecule which may coordinate the assembly of the catalytic subunit and a variable regulatory B subunit. Component of the Sca1 complex, a regulator of cell motility, chemotaxis and signal relay. The Sca1 complex is recruited to the plasma membrane in a chemoattractant- and F-actin-dependent manner and is enriched at the leading edge of chemotaxing cells where it regulates F-actin dynamics and signal relay by controlling the activation of rasC and the downstream target of rapamycin complex 2 (TORC2)-Akt/protein kinase B (PKB) pathway. The chain is Protein phosphatase 2A scaffold subunit (pppA) from Dictyostelium discoideum (Social amoeba).